A 537-amino-acid chain; its full sequence is CTP synthase (537 aa).

The amidoligase domain stretch occupies residues 1–267 (MTNTKFVFVT…ISVLEERLFG (267 aa)). Ser15 lines the CTP pocket. Ser15 is a binding site for UTP. 16–21 (SVGKGI) is an ATP binding site. Tyr56 contributes to the L-glutamine binding site. Asp73 provides a ligand contact to ATP. The Mg(2+) site is built by Asp73 and Glu141. Residues 148–150 (DIE), 188–193 (KTKPTQ), and Lys224 contribute to the CTP site. UTP is bound by residues 188–193 (KTKPTQ) and Lys224. In terms of domain architecture, Glutamine amidotransferase type-1 spans 297 to 535 (YVVLPDAYLS…LSEAVAKASP (239 aa)). L-glutamine is bound at residue Gly355. The Nucleophile; for glutamine hydrolysis role is filled by Cys382. L-glutamine-binding positions include 383–386 (LGMQ), Glu406, and Arg463. Catalysis depends on residues His508 and Glu510.

It belongs to the CTP synthase family. Homotetramer.

The catalysed reaction is UTP + L-glutamine + ATP + H2O = CTP + L-glutamate + ADP + phosphate + 2 H(+). It carries out the reaction L-glutamine + H2O = L-glutamate + NH4(+). It catalyses the reaction UTP + NH4(+) + ATP = CTP + ADP + phosphate + 2 H(+). The protein operates within pyrimidine metabolism; CTP biosynthesis via de novo pathway; CTP from UDP: step 2/2. With respect to regulation, allosterically activated by GTP, when glutamine is the substrate; GTP has no effect on the reaction when ammonia is the substrate. The allosteric effector GTP functions by stabilizing the protein conformation that binds the tetrahedral intermediate(s) formed during glutamine hydrolysis. Inhibited by the product CTP, via allosteric rather than competitive inhibition. In terms of biological role, catalyzes the ATP-dependent amination of UTP to CTP with either L-glutamine or ammonia as the source of nitrogen. Regulates intracellular CTP levels through interactions with the four ribonucleotide triphosphates. The protein is CTP synthase of Coprothermobacter proteolyticus (strain ATCC 35245 / DSM 5265 / OCM 4 / BT).